The following is a 586-amino-acid chain: Probable transporter AQR1 (586 aa).

2 disordered regions span residues 1–44 and 61–82; these read MSRS…FEGA and EGDLDSETSSHSSDDKVDPTQQ. The Extracellular segment spans residues 1–99; sequence MSRSNSIYTE…PYTLLSYGQK (99 aa). The span at 19-40 shows a compositional bias: basic and acidic residues; it reads NEQHLTREYTKPDGQTKSEKLN. Residues 100 to 120 traverse the membrane as a helical segment; that stretch reads WGMVAILTMCGFWSSLGSPIY. Topologically, residues 121 to 139 are cytoplasmic; sequence YPALRQLEKQFNVDENMVN. The chain crosses the membrane as a helical span at residues 140-160; the sequence is VTVVVYLLFQGISPTVSGGLA. Topologically, residues 161 to 166 are extracellular; sequence DCFGRR. Residues 167–187 form a helical membrane-spanning segment; it reads PIILAGMLIYVIASIGLACAP. Ser188 is a topological domain (cytoplasmic). The helical transmembrane segment at 189-209 threads the bilayer; that stretch reads YGVIIFLRCIQSIGISPTIAI. Residues 210–225 lie on the Extracellular side of the membrane; it reads SSGVVGDFTLKHERGT. A helical transmembrane segment spans residues 226–246; the sequence is FVGATSGFVLLGQCFGSLIGA. The Cytoplasmic portion of the chain corresponds to 247-255; the sequence is VLTARWDWR. Residues 256–276 form a helical membrane-spanning segment; that stretch reads AIFWFLTIGCGSCFLIAFLIL. The Extracellular portion of the chain corresponds to 277–334; that stretch reads PETKRTIAGNLSIKPKRFINRAPIFLLGPVRRRFKYDNPDYETLDPTIPKLDLSSAGK. Residues 335–355 traverse the membrane as a helical segment; the sequence is ILVLPEIILSLFPSGLLFAMW. Residues 356–374 are Cytoplasmic-facing; the sequence is TLMLSSISSGLSVAPYNYH. The helical transmembrane segment at 375 to 395 threads the bilayer; the sequence is LVIIGVCYLPGGIGGLMGSFF. Topologically, residues 396–433 are extracellular; the sequence is TGRIIDMYFKRKIKKFEQDKANGLIPQDAEINMFKVRL. The helical transmembrane segment at 434 to 454 threads the bilayer; sequence VCLLPQNFLAVVAYLLFGWSI. The Cytoplasmic segment spans residues 455-459; that stretch reads DKGWR. Residues 460-480 traverse the membrane as a helical segment; the sequence is IESILITSFVCSYCAMSTLST. The Extracellular segment spans residues 481–523; the sequence is STTLLVDLYPTKSSTASSCFNFVRCSLSTIFMGCFAKMKAAMT. A helical transmembrane segment spans residues 524–544; sequence VGGTFTFLCALVFFFNFLMFI. Residues 545 to 586 are Cytoplasmic-facing; the sequence is PMKYGMKWREDRLLKQQRQSWLNTLAVKAKKGTKRDQNDNHN.

The protein belongs to the major facilitator superfamily. CAR1 family.

Its subcellular location is the membrane. In terms of biological role, probable transporter that confers resistance to short-chain monocarboxylic acids and quinidine. This chain is Probable transporter AQR1 (AQR1), found in Saccharomyces cerevisiae (strain ATCC 204508 / S288c) (Baker's yeast).